Consider the following 224-residue polypeptide: Agamous-like MADS-box protein AGL9 homolog (224 aa).

Positions 3-57 (RGRVELKRIEGKINRQVTFAKRRNGLLKKAYELSVLCDAEVALIIFSNRGKLYEF) constitute an MADS-box domain. Positions 89–179 (EISSQQEYLK…KQRLMEGSQL (91 aa)) constitute a K-box domain.

In terms of tissue distribution, flower specific.

The protein localises to the nucleus. Functionally, probable transcription factor active in inflorescence development and floral organogenesis. In Solanum lycopersicum (Tomato), this protein is Agamous-like MADS-box protein AGL9 homolog (TDR5).